Reading from the N-terminus, the 216-residue chain is Outer-membrane lipoprotein LolB (216 aa).

A signal peptide spans 1-21 (MLIFKICFYRLLPLSVLLLAA). Cys-22 is lipidated: N-palmitoyl cysteine. Residue Cys-22 is the site of S-diacylglycerol cysteine attachment.

Belongs to the LolB family. In terms of assembly, monomer.

The protein resides in the cell outer membrane. Functionally, plays a critical role in the incorporation of lipoproteins in the outer membrane after they are released by the LolA protein. The chain is Outer-membrane lipoprotein LolB from Hamiltonella defensa subsp. Acyrthosiphon pisum (strain 5AT).